The sequence spans 670 residues: Amyloid beta A4 precursor protein-binding family B member 1-interacting protein (670 aa).

S55 is modified (phosphoserine). Positions 179-266 (KKLVVKVHMD…KVLFLEKEER (88 aa)) constitute a Ras-associating domain. In terms of domain architecture, PH spans 313-422 (VPELEGALYL…WVMGIRIAKY (110 aa)). The tract at residues 449 to 653 (VGTPMPAQPS…PGAPGNSEQD (205 aa)) is disordered. Polar residues predominate over residues 456–475 (QPSTVSSGLKTGTSQPNGQM). S532 carries the post-translational modification Phosphoserine. Position 534 is a phosphothreonine (T534). The residue at position 537 (S537) is a Phosphoserine. Composition is skewed to pro residues over residues 553–567 (PHPP…PPPP), 576–599 (LPPP…PPPA), 606–615 (LPPPPPPPPC), and 625–634 (PLPPKKPLVP).

It belongs to the MRL family. Interacts, through the N-terminal Pro-rich region, with the WW domain of APBB1. Interacts with RAP1A, PFN1, VASP and ENAH. As to expression, ubiquitously expressed with high expression in the hematopoietic system.

It is found in the cell membrane. The protein localises to the cell projection. The protein resides in the lamellipodium. Its subcellular location is the cell junction. It localises to the focal adhesion. It is found in the cytoplasm. The protein localises to the cytoskeleton. In terms of biological role, appears to function in the signal transduction from Ras activation to actin cytoskeletal remodeling. Suppresses insulin-induced promoter activities through AP1 and SRE. Mediates Rap1-induced adhesion. The protein is Amyloid beta A4 precursor protein-binding family B member 1-interacting protein (Apbb1ip) of Mus musculus (Mouse).